The following is a 964-amino-acid chain: Myocardin-related transcription factor A (964 aa).

Positions 1–291 are mediates interaction with SCAI and ACTB; that stretch reads MTLLEPEMLM…KQDKGAPAMD (291 aa). An RPEL 1 repeat occupies 15 to 40; that stretch reads SVLQLKLQQRRTREELVSQGIMPPLK. S41 is modified (phosphoserine). The tract at residues 41-58 is intervening spacer sequence 1; the sequence is SPAAFHEQRRSLERARTE. Residues 59 to 84 form an RPEL 2 repeat; that stretch reads DYLKRKIRSRPERAELVRMHILEETS. A Bipartite Nuclear localization signal motif is present at residues 62-100; the sequence is KRKIRSRPERAELVRMHILEETSAEPSLQAKQLKLKRAR. Residues 85–102 form an intervening spacer sequence 2 region; that stretch reads AEPSLQAKQLKLKRARLA. One copy of the RPEL 3 repeat lies at 103–128; the sequence is DDLNEKIAQRPGPMELVEKNILPVES. Disordered regions lie at residues 145-292 and 328-371; these read ADSS…AMDS and LPAP…RQSS. 3 positions are modified to phosphoserine: S159, S174, and S191. Positions 186–197 are enriched in polar residues; sequence SATSISPTQVLS. Positions 215–224 are enriched in pro residues; that stretch reads PPLPPAPLLP. Residues 251 to 266 are compositionally biased toward basic and acidic residues; sequence ASEKSQRSKKAKELKP. Residues 340–365 show a composition bias toward low complexity; that stretch reads GSSAPTPSRSLSTSSSPSSGTPGPSG. Phosphoserine occurs at positions 349 and 351. T352 carries the phosphothreonine modification. A phosphoserine mark is found at S355 and S358. T360 is subject to Phosphothreonine. S371 is subject to Phosphoserine. Residues 385 to 419 enclose the SAP domain; it reads LDDMKVAELKQELKLRSLPVSGTKTELIERLRAYQ. Phosphoserine occurs at positions 423 and 484. Residues 484–508 are disordered; that stretch reads STGSTPPVSPTPSERSLLSTGDENS. T485 carries the phosphothreonine modification. S487 bears the Phosphoserine mark. T488 is modified (phosphothreonine). S492 is modified (phosphoserine). Residue T494 is modified to Phosphothreonine. The residue at position 496 (S496) is a Phosphoserine. The span at 497–508 shows a compositional bias: polar residues; that stretch reads ERSLLSTGDENS. Phosphoserine is present on residues S520, S530, S544, and S548. The stretch at 552–600 forms a coiled coil; it reads RAELEGLDKDQMLQEKDKQIEELTRMLQQKQQLVELLRLQLEQQKRAQQ. Phosphoserine occurs at positions 605, 606, 651, 687, 718, 724, and 728. Residues 638-673 are disordered; that stretch reads TTNHGDTQAPAPESPPVVVKQEAGPPEPDLAPSSQL. 2 disordered regions span residues 706–779 and 796–849; these read NKSA…SSSQ and ADFK…RLED. Low complexity predominate over residues 715–727; the sequence is PAGSPQQPLSQPG. Polar residues predominate over residues 764 to 779; the sequence is TVTQQPKQQENGSSSQ. The span at 796–810 shows a compositional bias: basic and acidic residues; it reads ADFKEPPSLPGKEKS. S810 is subject to Phosphoserine. Phosphothreonine is present on T822. Residues S826 and S840 each carry the phosphoserine modification. Position 842 is a phosphothreonine (T842). The residue at position 892 (S892) is a Phosphoserine.

Interacts with SRF, forming the SRF-MRTFA nuclear complex which binds the 5'-CArG-3' consensus motif (CArG box) on DNA via SRF. Interacts (via RPEL repeats) with globular actin (G-actin), thereby regulating its subcellular location and activity of the complex formed with SRF. Either forms a trivalent (by binding three G-actin monomers) or pentavalent (by binding five G-actin monomers) complex with G-actin. Forms a nuclear ternary complex with SCAI and SRF, leading to suppress MRTFA-induced SRF transcriptional activity. Interacts with beta-actin (ACTB); interaction with ACTB prevents interaction with SCAI. Interacts with MRTFB. Phosphorylation at Ser-41 by Erk inhibits binding of globular actin (G-actin), unmasking the nuclear localization signal (NLS) and promoting nuclear import. Expressed in heart, brain, spleen, lung, liver, muscle, kidney and testis.

It is found in the cytoplasm. The protein resides in the nucleus. Transcription coactivator that associates with the serum response factor (SRF) transcription factor to control expression of genes regulating the cytoskeleton during development, morphogenesis and cell migration. The SRF-MRTFA complex activity responds to Rho GTPase-induced changes in cellular globular actin (G-actin) concentration, thereby coupling cytoskeletal gene expression to cytoskeletal dynamics. MRTFA binds G-actin via its RPEL repeats, regulating activity of the MRTFA-SRF complex. Activity is also regulated by filamentous actin (F-actin) in the nucleus. The sequence is that of Myocardin-related transcription factor A (Mrtfa) from Mus musculus (Mouse).